The primary structure comprises 303 residues: Taste receptor type 2 member 2 (303 aa).

The Extracellular segment spans residues 1-10 (MALSFSAILH). The helical transmembrane segment at 11-31 (IIMMSAEFFTGITVNGFLIIV) threads the bilayer. Residues 32–56 (NCNELIKHRKLMPIQILLMCIGMSR) are Cytoplasmic-facing. A helical membrane pass occupies residues 57–77 (FGLQMVLMVQSFFSVFFPLLY). The Extracellular segment spans residues 78–79 (VK). A helical transmembrane segment spans residues 80 to 100 (IIYGAAMMFLWMFFSSISLWF). The Cytoplasmic segment spans residues 101–102 (AT). The helical transmembrane segment at 103–123 (CLSVFYCLKISGFTQSCFLWL) threads the bilayer. At 124 to 129 (KFRIPK) the chain is on the extracellular side. Residues 130–150 (LIPWLLLGSVLASVSIASVCI) traverse the membrane as a helical segment. At 151-185 (EVDYAKNVEEDALRNTTLKKSKTKIKKISEVLLVN) the chain is on the cytoplasmic side. The helical transmembrane segment at 186–206 (LALIFPLAIFVMCTSMLLISL) threads the bilayer. At 207–234 (YKHTHRMQHGSHGFRNANTEAHINALKT) the chain is on the extracellular side. The chain crosses the membrane as a helical span at residues 235 to 255 (VITFFCFFISYFAAFMTNMTF). Over 256-277 (SLPYRSHQFFMLKDIMAAYPSG) the chain is Cytoplasmic.

It belongs to the G-protein coupled receptor T2R family.

It is found in the cell membrane. Bitter taste receptor that detects natural and synthetic bitter compounds. The protein is Taste receptor type 2 member 2 of Homo sapiens (Human).